Reading from the N-terminus, the 145-residue chain is Basic leucine zipper 1 (145 aa).

Polar residues predominate over residues methionine 1 to serine 11. The segment at methionine 1 to methionine 39 is disordered. The 64-residue stretch at aspartate 14 to leucine 77 folds into the bZIP domain. The tract at residues lysine 16–lysine 37 is basic motif. The tract at residues isoleucine 46–isoleucine 53 is leucine-zipper.

Belongs to the bZIP family. Interacts with ZFP7, BZIP4, BZIP9, BZIP10, BZIP11, BZIP25, BZIP42, BZIP44, BZIP53, BZIP58 and BZIP63. In terms of tissue distribution, expressed in both shoots, including young leaves, stipulae and trichomes (except in cotyledons and hypocotyl), and roots, including vascular tissues (e.g. in both the phloem and the xylem). Present in seeds and pollen. Restricted to vasculatures and roots in the presence of sucrose or glucose.

The protein resides in the nucleus. Transcription factor that binds to the C-box-like motif (5'-TGCTGACGTCA-3') and G-box-like motif (5'-CCACGTGGCC-3'), ABRE elements, of gene promoters involved in sugar signaling. Activated by low energy stress both at transcriptional and post-transcriptional mechanisms. Promotes dark-induced senescence and participates in the transcriptional reprogramming of amino acid metabolism during the dark-induced starvation response. Transcription activator of the mannan synthase CSLA9. Recognizes and binds to DNA-specific sequence of CSLA9 promoter. The sequence is that of Basic leucine zipper 1 (BZIP1) from Arabidopsis thaliana (Mouse-ear cress).